The chain runs to 167 residues: Peptide deformylase (167 aa).

Fe cation-binding residues include Cys-91 and His-133. Residue Glu-134 is part of the active site. Residue His-137 coordinates Fe cation.

Belongs to the polypeptide deformylase family. Fe(2+) is required as a cofactor.

It carries out the reaction N-terminal N-formyl-L-methionyl-[peptide] + H2O = N-terminal L-methionyl-[peptide] + formate. Functionally, removes the formyl group from the N-terminal Met of newly synthesized proteins. Requires at least a dipeptide for an efficient rate of reaction. N-terminal L-methionine is a prerequisite for activity but the enzyme has broad specificity at other positions. The sequence is that of Peptide deformylase from Buchnera aphidicola subsp. Schizaphis graminum (strain Sg).